We begin with the raw amino-acid sequence, 199 residues long: Imidazole glycerol phosphate synthase subunit HisH 2 (199 aa).

A Glutamine amidotransferase type-1 domain is found at 1 to 199 (MIAVIDVSGN…NNFLSLESKC (199 aa)). Residue Cys-76 is the Nucleophile of the active site. Catalysis depends on residues His-177 and Glu-179.

Heterodimer of HisH and HisF.

It localises to the cytoplasm. The enzyme catalyses 5-[(5-phospho-1-deoxy-D-ribulos-1-ylimino)methylamino]-1-(5-phospho-beta-D-ribosyl)imidazole-4-carboxamide + L-glutamine = D-erythro-1-(imidazol-4-yl)glycerol 3-phosphate + 5-amino-1-(5-phospho-beta-D-ribosyl)imidazole-4-carboxamide + L-glutamate + H(+). It carries out the reaction L-glutamine + H2O = L-glutamate + NH4(+). The protein operates within amino-acid biosynthesis; L-histidine biosynthesis; L-histidine from 5-phospho-alpha-D-ribose 1-diphosphate: step 5/9. IGPS catalyzes the conversion of PRFAR and glutamine to IGP, AICAR and glutamate. The HisH subunit provides the glutamine amidotransferase activity that produces the ammonia necessary to HisF for the synthesis of IGP and AICAR. The polypeptide is Imidazole glycerol phosphate synthase subunit HisH 2 (Legionella pneumophila (strain Lens)).